Consider the following 150-residue polypeptide: Putative transmembrane protein DDB_G0277665 (150 aa).

Transmembrane regions (helical) follow at residues 4–24 (TLIIIIVSVIVGYLISHFNIL) and 42–62 (VIVGAIVGQALIYFFVFFLPL).

The protein localises to the membrane. The protein is Putative transmembrane protein DDB_G0277665 of Dictyostelium discoideum (Social amoeba).